The chain runs to 357 residues: RNA-binding protein 4B (357 aa).

RRM domains are found at residues 2-72 (VKLF…ASKN) and 78-148 (TKLH…LSTS). A CCHC-type zinc finger spans residues 160 to 177 (SGCYRCGKEGHWSKECPV). Residues 196-357 (AVRTPYTMGY…YVDRTRYSAF (162 aa)) are interaction with TNPO3.

In terms of assembly, interacts with TNPO3, which may mediate nuclear import of the protein. In terms of tissue distribution, expressed in the suprachiasmatic nucleus (SCN) (at protein level). Expressed in the suprachiasmatic nucleus (SCN).

The protein localises to the nucleus. Its subcellular location is the nucleolus. Functionally, required for the translational activation of PER1 mRNA in response to circadian clock. Binds directly to the 3'-UTR of the PER1 mRNA. The protein is RNA-binding protein 4B (Rbm4b) of Mus musculus (Mouse).